Here is a 467-residue protein sequence, read N- to C-terminus: Argininosuccinate lyase (467 aa).

This sequence belongs to the lyase 1 family. Argininosuccinate lyase subfamily.

Its subcellular location is the cytoplasm. It carries out the reaction 2-(N(omega)-L-arginino)succinate = fumarate + L-arginine. It functions in the pathway amino-acid biosynthesis; L-arginine biosynthesis; L-arginine from L-ornithine and carbamoyl phosphate: step 3/3. The protein is Argininosuccinate lyase of Rhizobium johnstonii (strain DSM 114642 / LMG 32736 / 3841) (Rhizobium leguminosarum bv. viciae).